A 423-amino-acid chain; its full sequence is Carboxypeptidase B2 (423 aa).

Positions 1–22 (MKLCSLAVLVPIVLFCEQHVFA) are cleaved as a signal peptide. A propeptide spans 23 to 114 (FQSGQVLAAL…QISNDTVSPR (92 aa)) (activation peptide). 3 N-linked (GlcNAc...) asparagine glycosylation sites follow: asparagine 44, asparagine 73, and asparagine 85. A glycan (N-linked (GlcNAc...) (complex) asparagine) is linked at asparagine 108. Positions 122–419 (QYHSLNEIYS…AAVSKIAWHV (298 aa)) constitute a Peptidase M14 domain. An intrachain disulfide couples cysteine 178 to cysteine 191. 2 residues coordinate Zn(2+): histidine 181 and glutamate 184. Substrate-binding positions include 181 to 184 (HARE) and arginine 239. Residue asparagine 241 is glycosylated (N-linked (GlcNAc...) asparagine; partial). 2 disulfides stabilise this stretch: cysteine 250-cysteine 274 and cysteine 265-cysteine 279. 256-257 (NR) contacts substrate. Histidine 310 serves as a coordination point for Zn(2+). Substrate contacts are provided by residues 311–312 (SY) and tyrosine 363. The active-site Proton donor/acceptor is glutamate 385.

Belongs to the peptidase M14 family. It depends on Zn(2+) as a cofactor. In terms of processing, N-glycosylated. N-glycan at Asn-108: Hex5HexNAc4. As to expression, plasma; synthesized in the liver.

The protein resides in the secreted. It carries out the reaction Release of C-terminal Arg and Lys from a polypeptide.. TAFI/CPB2 is unique among carboxypeptidases in that it spontaneously inactivates with a short half-life, a property that is crucial for its role in controlling blood clot lysis. The zymogen is stabilized by interactions with the activation peptide. Release of the activation peptide increases a dynamic flap mobility and in time this leads to conformational changes that disrupt the catalytic site and expose a cryptic thrombin-cleavage site present at Arg-324. In terms of biological role, cleaves C-terminal arginine or lysine residues from biologically active peptides such as kinins or anaphylatoxins in the circulation thereby regulating their activities. Down-regulates fibrinolysis by removing C-terminal lysine residues from fibrin that has already been partially degraded by plasmin. The sequence is that of Carboxypeptidase B2 (CPB2) from Homo sapiens (Human).